The following is a 155-amino-acid chain: MRCPFCGNIDTQVKDSRPAEDHVSIRRRRFCPACGGRFTTYERVQLRDLVVIKSSGKREDFDRTKLERSIRIAMQKRPIEPERIDQMISGIVRRLESLGDTDIPSKVIGEIVMESLARIDTVAYVRFASVYKNFQAADDFDKFVSELRPSAPAEE.

Residues 3–34 fold into a zinc finger; the sequence is CPFCGNIDTQVKDSRPAEDHVSIRRRRFCPAC. Residues 49–139 enclose the ATP-cone domain; that stretch reads LVVIKSSGKR…VYKNFQAADD (91 aa).

Belongs to the NrdR family. Zn(2+) serves as cofactor.

Functionally, negatively regulates transcription of bacterial ribonucleotide reductase nrd genes and operons by binding to NrdR-boxes. The polypeptide is Transcriptional repressor NrdR (Cereibacter sphaeroides (strain ATCC 17029 / ATH 2.4.9) (Rhodobacter sphaeroides)).